Here is a 342-residue protein sequence, read N- to C-terminus: Central glycolytic genes regulator (342 aa).

The H-T-H motif DNA-binding region spans 37–56 (RRNLAVSLGLTERVLRSEVT).

This sequence belongs to the SorC transcriptional regulatory family. Homotetramer.

Functionally, in the absence of glucose, represses the transcription of the gapA operon, which encodes five key glycolytic enzymes. The chain is Central glycolytic genes regulator (cggR) from Priestia megaterium (strain DSM 319 / IMG 1521) (Bacillus megaterium).